Consider the following 229-residue polypeptide: MADTLESSLEDPLRSFVRVLEKRDGTVLRLQQYSSGGVGCVVWDAAIVLSKYLETPEFSGDGAHALSRRSVLELGSGTGAVGLMAATLGADVVVTDLEELQDLLKMNINMNKHLVTGSVQAKVLKWGEEIEGFPSPPDFILMADCIYYEESLEPLLKTLKDISGFETCIICCYEQRTMGKNPEIEKKYFELLQLDFDFEKIPLEKHDEEYRSEDIHIIYIRKKKSKFPS.

Alanine 2 bears the N-acetylalanine mark. Serine 8 carries the post-translational modification Phosphoserine. S-adenosyl-L-methionine contacts are provided by residues tryptophan 43, 75–77 (GSG), aspartate 96, tryptophan 126, alanine 143, and tyrosine 148.

This sequence belongs to the methyltransferase superfamily. METTL21 family. As to quaternary structure, interacts with ALKBH6. Interacts with ASPSCR1 and UBXN6; interaction with ASPSCR1, but not with UBXN6, enhances VCP methylation.

It localises to the cytoplasm. The catalysed reaction is L-lysyl-[protein] + 3 S-adenosyl-L-methionine = N(6),N(6),N(6)-trimethyl-L-lysyl-[protein] + 3 S-adenosyl-L-homocysteine + 3 H(+). Functionally, protein N-lysine methyltransferase that specifically trimethylates 'Lys-315' of VCP/p97; this modification may decrease VCP ATPase activity. This chain is Protein N-lysine methyltransferase METTL21D (VCPKMT), found in Homo sapiens (Human).